The following is a 438-amino-acid chain: Cobyrinate a,c-diamide synthase (438 aa).

The GATase cobBQ-type domain maps to Thr-242 to Ala-426. Cys-325 serves as the catalytic Nucleophile.

The protein belongs to the CobB/CbiA family. It depends on Mg(2+) as a cofactor.

The enzyme catalyses cob(II)yrinate + 2 L-glutamine + 2 ATP + 2 H2O = cob(II)yrinate a,c diamide + 2 L-glutamate + 2 ADP + 2 phosphate + 2 H(+). Its pathway is cofactor biosynthesis; adenosylcobalamin biosynthesis; cob(II)yrinate a,c-diamide from sirohydrochlorin (anaerobic route): step 10/10. Functionally, catalyzes the ATP-dependent amidation of the two carboxylate groups at positions a and c of cobyrinate, using either L-glutamine or ammonia as the nitrogen source. This Herminiimonas arsenicoxydans protein is Cobyrinate a,c-diamide synthase.